Reading from the N-terminus, the 132-residue chain is DNA-binding protein inhibitor ID-2 (132 aa).

Positions 23–75 (ARSKTPVDDPMSLLYNMNDCYSKLKELVPSIPQNKKVSKMEILQHVIDYILDL) constitute a bHLH domain. Residues 105-114 (LNTDISILSL) carry the Nuclear export signal motif.

In terms of assembly, heterodimer with other HLH proteins.

The protein localises to the cytoplasm. It is found in the nucleus. In terms of biological role, transcriptional regulator (lacking a basic DNA binding domain) which negatively regulates the basic helix-loop-helix (bHLH) transcription factors by forming heterodimers and inhibiting their DNA binding and transcriptional activity. Inhibits the activity of both neurogenic (neurod1/neuroD) and myogenic (myod1/myoD) bHLH factors. May play a role in the regulation of the circadian clock. This Xenopus tropicalis (Western clawed frog) protein is DNA-binding protein inhibitor ID-2.